Reading from the N-terminus, the 79-residue chain is Defensin-like protein 109 (79 aa).

The signal sequence occupies residues 1–24 (MDFTKKILVVFAFTIMLGISSVHC). Intrachain disulfides connect C41–C76, C47–C68, C54–C74, and C58–C75.

This sequence belongs to the DEFL family.

It is found in the secreted. This chain is Defensin-like protein 109, found in Arabidopsis thaliana (Mouse-ear cress).